We begin with the raw amino-acid sequence, 327 residues long: Protoheme IX farnesyltransferase (327 aa).

8 consecutive transmembrane segments (helical) span residues 35–55 (LIPLLLATTLGGMALSEGWPL), 60–80 (LVCTLGGGALASAAAGVLNCL), 106–126 (SAFIGAIACTLAAAMLLVSGV), 129–149 (LAAGLSLLGLCSYVLLYTALL), 157–177 (IVIGGVAGAIPPLVGAAAATG), 185–205 (WLFALVMVWTPAHFWALALLL), 234–254 (GWITVLLSSLGVFALPSGGAF), and 283–303 (AKALFRWSILYLFGVCLLLIL).

It belongs to the UbiA prenyltransferase family. Protoheme IX farnesyltransferase subfamily.

It localises to the cell inner membrane. The catalysed reaction is heme b + (2E,6E)-farnesyl diphosphate + H2O = Fe(II)-heme o + diphosphate. It participates in porphyrin-containing compound metabolism; heme O biosynthesis; heme O from protoheme: step 1/1. In terms of biological role, converts heme B (protoheme IX) to heme O by substitution of the vinyl group on carbon 2 of heme B porphyrin ring with a hydroxyethyl farnesyl side group. This chain is Protoheme IX farnesyltransferase, found in Synechococcus sp. (strain CC9605).